Here is a 376-residue protein sequence, read N- to C-terminus: Nuclear hormone receptor family member nhr-124 (376 aa).

The segment at residues 11-89 (PNICAICHQK…LGMRYHNSSE (79 aa)) is a DNA-binding region (nuclear receptor). NR C4-type zinc fingers lie at residues 14 to 34 (CAICHQKAFGYNYEVVSCNAC) and 50 to 72 (CKKGGKCFDGDDLLTSRPKCRSC). Residues 125 to 371 (HLHALNETRY…FSKILTEACR (247 aa)) enclose the NR LBD domain.

It belongs to the nuclear hormone receptor family.

The protein localises to the nucleus. Orphan nuclear receptor. The polypeptide is Nuclear hormone receptor family member nhr-124 (nhr-124) (Caenorhabditis elegans).